Consider the following 1379-residue polypeptide: MAERANLVFHNKVIDGTAIKRLISRLIDHFGMAYTSHILDQVKTLGFQQATATSISLGIDDLLTIPSKGWLVQDAEQQSLILEKHHHYGNVHAVEKLRQSIEIWYATSEYLRQEMNPNFRMTDPFNPVHMMSFSGARGNASQVHQLVGMRGLMSDPQGQMIDLPIQSNLREGLSLTEYIISCYGARKGVVDTAVRTSDAGYLTRRLVEVVQHIVVRRTDCGTIRGISVSPRNKNRMMSERIFIQTLIGRVLADDIYIGSRCVAFRNQDLGIGLVNRLITFGTQSISIRTPFTCRSTSWICRLCYGRSPTHGDLVELGEAVGIIAGQSIGEPGTQLTLRTFHTGGVFTGGTAEHVRAPYNGKIKFNEDLVHPTRTRHGHPAFLCYIDLSVIIESEDIIHSVTIPPKSFLLVQNDQYVESEQVIAEIREGTYTFHFKERVRKYIYSDSEGEMHWSTDVSHAPEFTYSNVHLLPKTSHLWILSGGSCGSSLILFSIHKDQDQMNIPFLSVERKSISSFSVNNDQVSKKFVSSDFDDKKKSEIPHYSDLNGNLGTSHYNFIYSAIFHENSDLLAKRRRNRFIIPFQSIQEQEKKFIPHSGISIEIPINGIFRRNSIFAFFDDPRYRRKSSGILKYGTLKADSIIQKEDMIEYRGVQKFKTKYEMKVDRFFFIPEEVHILPESSAIMVQNYSIIGVDTRITLNIRSQVGGLIRVERKKKRIELKIFSGDIHFPDKADKISRHSGILIPPGRGKTNSKESKKLKNWIYVQRITPTKKKFFVLVRPVATYEIADSINLATLFPQDLFQEKDNIQLRVFNYILYGNGKPTRGISDTSIQLVRTCLVLNWDQENNNSSLEEIRAFFVEVSTKGLIRDFIRIGLVKSHISYIRKRNNPSDSGLISADHMNPFYSISPKAGILQQSLRQNHGTIRMFLNRNKESQSLLILSSSNCFRIGPFNHVKYHNVINQSIKKNPLITIKNSLGPLGTAIQISNFYSFLPLLTYNLISVIKYLQLDNLKYIFQVINSYLIDENGRIFNLDPYNNVVLNPFKLNWYFLHQNYHHNYCEETSTIISLGQFFCENVCIAKKEPHLKSGQVLIVQRDSVVIRSAKPYLATPGAKVHGHYREILYEGDTLVTFIYEKSRSGDITQGLPKVEQVLEVRSIDSISLNLEKRIKGWNKSITRILGIPWGFLIGAELTIVQSRISLVNKIQKVYRSQGVQIHNRHIEIIVRQITSKVLVSEEGMSNVFLPGELIGLLRAERTGRALEEAICYRAVLLGITRASLNTQSFISEASFQETARVLAKAALRGRIDWLKGLKENVVLGGVIPAGTGFNKGLVHCSRQHTNILLEKKTKNLSLFERDMRDILFYHREFCDSSISKSDFSRI.

4 residues coordinate Zn(2+): Cys220, Cys293, Cys300, and Cys303.

The protein belongs to the RNA polymerase beta' chain family. RpoC2 subfamily. In terms of assembly, in plastids the minimal PEP RNA polymerase catalytic core is composed of four subunits: alpha, beta, beta', and beta''. When a (nuclear-encoded) sigma factor is associated with the core the holoenzyme is formed, which can initiate transcription. The cofactor is Zn(2+).

It is found in the plastid. It localises to the chloroplast. The catalysed reaction is RNA(n) + a ribonucleoside 5'-triphosphate = RNA(n+1) + diphosphate. In terms of biological role, DNA-dependent RNA polymerase catalyzes the transcription of DNA into RNA using the four ribonucleoside triphosphates as substrates. This is DNA-directed RNA polymerase subunit beta'' from Nasturtium officinale (Watercress).